The sequence spans 302 residues: Enoyl-CoA delta isomerase 1, mitochondrial (302 aa).

A mitochondrion-targeting transit peptide spans 1-41; that stretch reads MALVASVRVPARVLLRAGARLPGAALGRTERAAGGGDGARR. N6-acetyllysine; alternate is present on K61. An N6-succinyllysine; alternate modification is found at K61. N6-succinyllysine is present on K84. An N6-acetyllysine modification is found at K89. Residues 106 to 110, G153, and N177 each bind substrate; that span reads AGLDL. The residue at position 283 (K283) is an N6-acetyllysine; alternate. The residue at position 283 (K283) is an N6-succinyllysine; alternate. K288 is subject to N6-succinyllysine.

It belongs to the enoyl-CoA hydratase/isomerase family. As to quaternary structure, homotrimer. Expressed in liver (at protein level).

Its subcellular location is the mitochondrion matrix. It carries out the reaction a (3Z)-enoyl-CoA = a 4-saturated (2E)-enoyl-CoA. The enzyme catalyses a (3E)-enoyl-CoA = a 4-saturated (2E)-enoyl-CoA. It catalyses the reaction (3Z)-octenoyl-CoA = (2E)-octenoyl-CoA. The catalysed reaction is (2E)-tetradecenoyl-CoA = (3Z)-tetradecenoyl-CoA. It carries out the reaction (3Z)-dodecenoyl-CoA = (2E)-dodecenoyl-CoA. The enzyme catalyses (3Z)-hexenoyl-CoA = (2E)-hexenoyl-CoA. It catalyses the reaction (3Z)-decenoyl-CoA = (2E)-decenoyl-CoA. The protein operates within lipid metabolism; fatty acid beta-oxidation. Functionally, key enzyme of fatty acid beta-oxidation. Able to isomerize both 3-cis (3Z) and 3-trans (3E) double bonds into the 2-trans (2E) form in a range of enoyl-CoA species, with a preference for (3Z)-enoyl-CoAs over (3E)-enoyl-CoAs. The catalytic efficiency of this enzyme is not affected by the fatty acyl chain length. The polypeptide is Enoyl-CoA delta isomerase 1, mitochondrial (ECI1) (Homo sapiens (Human)).